We begin with the raw amino-acid sequence, 90 residues long: uncharacterized protein (90 aa).

The protein resides in the mitochondrion. This is an uncharacterized protein from Ascobolus immersus.